Reading from the N-terminus, the 42-residue chain is Photosystem I reaction center subunit IX (42 aa).

A helical transmembrane segment spans residues 7–27 (YLSVAPVLSTLWFVSLAGLLI).

The protein belongs to the PsaJ family.

Its subcellular location is the plastid. The protein resides in the chloroplast thylakoid membrane. May help in the organization of the PsaE and PsaF subunits. The chain is Photosystem I reaction center subunit IX from Capsella bursa-pastoris (Shepherd's purse).